Here is a 489-residue protein sequence, read N- to C-terminus: Glycogen synthase (489 aa).

Lys15 provides a ligand contact to ADP-alpha-D-glucose.

This sequence belongs to the glycosyltransferase 1 family. Bacterial/plant glycogen synthase subfamily.

The catalysed reaction is [(1-&gt;4)-alpha-D-glucosyl](n) + ADP-alpha-D-glucose = [(1-&gt;4)-alpha-D-glucosyl](n+1) + ADP + H(+). It participates in glycan biosynthesis; glycogen biosynthesis. In terms of biological role, synthesizes alpha-1,4-glucan chains using ADP-glucose. This is Glycogen synthase from Francisella tularensis subsp. novicida (strain U112).